A 98-amino-acid polypeptide reads, in one-letter code: NADH-ubiquinone oxidoreductase chain 4L (98 aa).

The next 3 membrane-spanning stretches (helical) occupy residues Met1–Phe21, Leu26–Thr46, and Ile58–Leu78.

Belongs to the complex I subunit 4L family.

It is found in the mitochondrion membrane. The catalysed reaction is a ubiquinone + NADH + 5 H(+)(in) = a ubiquinol + NAD(+) + 4 H(+)(out). Core subunit of the mitochondrial membrane respiratory chain NADH dehydrogenase (Complex I) which catalyzes electron transfer from NADH through the respiratory chain, using ubiquinone as an electron acceptor. Part of the enzyme membrane arm which is embedded in the lipid bilayer and involved in proton translocation. The chain is NADH-ubiquinone oxidoreductase chain 4L (MT-ND4L) from Scyliorhinus canicula (Small-spotted catshark).